Here is a 305-residue protein sequence, read N- to C-terminus: tRNA dimethylallyltransferase (305 aa).

Residue 8 to 15 (GPTGTGKS) coordinates ATP. 10-15 (TGTGKS) contributes to the substrate binding site.

It belongs to the IPP transferase family. As to quaternary structure, monomer. Mg(2+) serves as cofactor.

The enzyme catalyses adenosine(37) in tRNA + dimethylallyl diphosphate = N(6)-dimethylallyladenosine(37) in tRNA + diphosphate. In terms of biological role, catalyzes the transfer of a dimethylallyl group onto the adenine at position 37 in tRNAs that read codons beginning with uridine, leading to the formation of N6-(dimethylallyl)adenosine (i(6)A). In Mycobacterium sp. (strain JLS), this protein is tRNA dimethylallyltransferase.